A 268-amino-acid chain; its full sequence is MNMKKWIAAALACSALALSACGGQGKDAAAPAANPGKVYRVASNAEFAPFESLDSKGNVEGFDVDLMNAMAKAGNFKIEFKHQPWDSLFPALNNGDADIVMSGVTITDDRKQSMDFSDPYFEITQVVLVPKGKKVSSSDDLKKMNKVGVVTGHTGDFSVSKLLGNDNPKIARFENVPLIIKELENGGLDSVVSDSAVIANYVKNNPAKGMDFVTLPDFTTEHYGIAVRKGDEATVKMLNDALEKVRESGEYDKIYAKYFAKEGGQAAK.

Positions 1-20 are cleaved as a signal peptide; the sequence is MNMKKWIAAALACSALALSA. Cysteine 21 carries the N-palmitoyl cysteine lipid modification. The S-diacylglycerol cysteine moiety is linked to residue cysteine 21.

The protein belongs to the bacterial solute-binding protein 3 family.

The protein localises to the cell membrane. Involved in histidine transport. The sequence is that of Probable histidine-binding protein (hisJ) from Neisseria gonorrhoeae.